The chain runs to 369 residues: MAQGWAGFSEEELRRLKQTKDPFEPQRRLPAKKSRQQLQREKALVEQSQKLGLQDGSTSLLPEQLLSAPKQRVNVQKPPFSSPTLPSHFTLTSPVGDGQPQGIESQPKELGLENSHDGHNNVEILPPKPDCKLEKKKVELQEKSRWEVLQQEQRLMEEKNKRKKALLAKAIAERSKRTQAETMKLKRIQKELQALDDMVSADIGILRNRIDQASLDYSYARKRFDRAEAEYIAAKLDIQRKTEIKEQLTEHLCTIIQQNELRKAKKLEELMQQLDVEADEETLELEVEVERLLHEQEVESRRPVVRLERPFQPAEESVTLEFAKENRKCQEQAVSPKVDDQCGNSSSIPFLSPNCPNQEGNDISAALAT.

The disordered stretch occupies residues 1–128 (MAQGWAGFSE…HNNVEILPPK (128 aa)). Residues 11 to 27 (EELRRLKQTKDPFEPQR) show a composition bias toward basic and acidic residues. Composition is skewed to polar residues over residues 46 to 61 (EQSQ…TSLL) and 82 to 93 (SPTLPSHFTLTS). Residues 106–120 (QPKELGLENSHDGHN) are compositionally biased toward basic and acidic residues. Residues 145-297 (RWEVLQQEQR…EVERLLHEQE (153 aa)) are a coiled coil. A necessary for interaction with RCHY1 region spans residues 188 to 369 (IQKELQALDD…GNDISAALAT (182 aa)). The disordered stretch occupies residues 334 to 369 (VSPKVDDQCGNSSSIPFLSPNCPNQEGNDISAALAT). Residues 342-361 (CGNSSSIPFLSPNCPNQEGN) are compositionally biased toward polar residues.

The protein belongs to the GORAB family. Interacts with SCYL1. Interacts with RCHY1 and RAB6A/RAB6.

The protein localises to the cytoplasm. It localises to the golgi apparatus. The polypeptide is RAB6-interacting golgin (GORAB) (Homo sapiens (Human)).